The primary structure comprises 465 residues: L-seryl-tRNA(Sec) selenium transferase (465 aa).

Lys-294 carries the N6-(pyridoxal phosphate)lysine modification.

The protein belongs to the SelA family. Requires pyridoxal 5'-phosphate as cofactor.

The protein resides in the cytoplasm. It carries out the reaction L-seryl-tRNA(Sec) + selenophosphate + H(+) = L-selenocysteinyl-tRNA(Sec) + phosphate. It functions in the pathway aminoacyl-tRNA biosynthesis; selenocysteinyl-tRNA(Sec) biosynthesis; selenocysteinyl-tRNA(Sec) from L-seryl-tRNA(Sec) (bacterial route): step 1/1. Functionally, converts seryl-tRNA(Sec) to selenocysteinyl-tRNA(Sec) required for selenoprotein biosynthesis. This chain is L-seryl-tRNA(Sec) selenium transferase, found in Mannheimia succiniciproducens (strain KCTC 0769BP / MBEL55E).